The primary structure comprises 197 residues: Inner membrane-spanning protein YciB (197 aa).

5 helical membrane-spanning segments follow: residues 22–42 (IYSATAALIIMVLLNVFYHWF), 48–68 (PSMMWITLILVMLFGGATLIF), 76–96 (WKPSILQWVLASGFLASHLIG), 121–141 (AAWVLFLLFSGALNLYVAYTF), and 144–164 (EIWVSFKLFGLMGLTILFLIG).

This sequence belongs to the YciB family.

Its subcellular location is the cell inner membrane. Plays a role in cell envelope biogenesis, maintenance of cell envelope integrity and membrane homeostasis. The polypeptide is Inner membrane-spanning protein YciB (Magnetococcus marinus (strain ATCC BAA-1437 / JCM 17883 / MC-1)).